A 349-amino-acid polypeptide reads, in one-letter code: Lipoyl synthase (349 aa).

Positions 55, 60, 66, 81, 85, 88, and 292 each coordinate [4Fe-4S] cluster. Residues 67 to 281 (WESREATFLI…ADFARELGFG (215 aa)) enclose the Radical SAM core domain.

The protein belongs to the radical SAM superfamily. Lipoyl synthase family. Requires [4Fe-4S] cluster as cofactor.

It is found in the cytoplasm. It carries out the reaction [[Fe-S] cluster scaffold protein carrying a second [4Fe-4S](2+) cluster] + N(6)-octanoyl-L-lysyl-[protein] + 2 oxidized [2Fe-2S]-[ferredoxin] + 2 S-adenosyl-L-methionine + 4 H(+) = [[Fe-S] cluster scaffold protein] + N(6)-[(R)-dihydrolipoyl]-L-lysyl-[protein] + 4 Fe(3+) + 2 hydrogen sulfide + 2 5'-deoxyadenosine + 2 L-methionine + 2 reduced [2Fe-2S]-[ferredoxin]. It participates in protein modification; protein lipoylation via endogenous pathway; protein N(6)-(lipoyl)lysine from octanoyl-[acyl-carrier-protein]: step 2/2. Its function is as follows. Catalyzes the radical-mediated insertion of two sulfur atoms into the C-6 and C-8 positions of the octanoyl moiety bound to the lipoyl domains of lipoate-dependent enzymes, thereby converting the octanoylated domains into lipoylated derivatives. The sequence is that of Lipoyl synthase from Corynebacterium diphtheriae (strain ATCC 700971 / NCTC 13129 / Biotype gravis).